The chain runs to 615 residues: Chaperone protein DnaK (615 aa).

The residue at position 177 (Thr177) is a Phosphothreonine; by autocatalysis. The disordered stretch occupies residues 567–615 (TKESQGIAMKAYQKAQEKQAQEKGTQENTTAKNEKPQDEVVDADFEEKK). A compositionally biased stretch (basic and acidic residues) spans 581–591 (AQEKQAQEKGT). Acidic residues predominate over residues 605–615 (EVVDADFEEKK).

The protein belongs to the heat shock protein 70 family.

Its function is as follows. Acts as a chaperone. The sequence is that of Chaperone protein DnaK from Onion yellows phytoplasma (strain OY-M).